The following is a 188-amino-acid chain: Peptidyl-tRNA hydrolase (188 aa).

Tyr-14 is a binding site for tRNA. His-19 (proton acceptor) is an active-site residue. The tRNA site is built by Tyr-64, Asn-66, and Asn-112.

It belongs to the PTH family. In terms of assembly, monomer.

It localises to the cytoplasm. It catalyses the reaction an N-acyl-L-alpha-aminoacyl-tRNA + H2O = an N-acyl-L-amino acid + a tRNA + H(+). In terms of biological role, hydrolyzes ribosome-free peptidyl-tRNAs (with 1 or more amino acids incorporated), which drop off the ribosome during protein synthesis, or as a result of ribosome stalling. Catalyzes the release of premature peptidyl moieties from peptidyl-tRNA molecules trapped in stalled 50S ribosomal subunits, and thus maintains levels of free tRNAs and 50S ribosomes. In Bacillus licheniformis (strain ATCC 14580 / DSM 13 / JCM 2505 / CCUG 7422 / NBRC 12200 / NCIMB 9375 / NCTC 10341 / NRRL NRS-1264 / Gibson 46), this protein is Peptidyl-tRNA hydrolase.